The primary structure comprises 548 residues: Phenylalanine--tRNA ligase beta subunit (548 aa).

The region spanning 275–350 (LKEDVLETTS…IAYGYNKFSG (76 aa)) is the B5 domain. 4 residues coordinate Mg(2+): Asp328, Asp334, Glu337, and Glu338.

Belongs to the phenylalanyl-tRNA synthetase beta subunit family. Type 2 subfamily. Tetramer of two alpha and two beta subunits. Requires Mg(2+) as cofactor.

It is found in the cytoplasm. It catalyses the reaction tRNA(Phe) + L-phenylalanine + ATP = L-phenylalanyl-tRNA(Phe) + AMP + diphosphate + H(+). This Methanocaldococcus jannaschii (strain ATCC 43067 / DSM 2661 / JAL-1 / JCM 10045 / NBRC 100440) (Methanococcus jannaschii) protein is Phenylalanine--tRNA ligase beta subunit.